Reading from the N-terminus, the 406-residue chain is Glucose-1-phosphate adenylyltransferase (406 aa).

Residues tyrosine 100, glycine 165, 181 to 182 (EK), and serine 199 contribute to the alpha-D-glucose 1-phosphate site.

The protein belongs to the bacterial/plant glucose-1-phosphate adenylyltransferase family. Homotetramer.

The catalysed reaction is alpha-D-glucose 1-phosphate + ATP + H(+) = ADP-alpha-D-glucose + diphosphate. The protein operates within glycan biosynthesis; glycogen biosynthesis. Functionally, involved in the biosynthesis of ADP-glucose, a building block required for the elongation reactions to produce glycogen. Catalyzes the reaction between ATP and alpha-D-glucose 1-phosphate (G1P) to produce pyrophosphate and ADP-Glc. The polypeptide is Glucose-1-phosphate adenylyltransferase (Streptomyces avermitilis (strain ATCC 31267 / DSM 46492 / JCM 5070 / NBRC 14893 / NCIMB 12804 / NRRL 8165 / MA-4680)).